A 160-amino-acid polypeptide reads, in one-letter code: Major pollen allergen Bet v 1-A (160 aa).

Residues Lys-55, Tyr-82, Tyr-84, and Asn-101 each coordinate brassinolide.

This sequence belongs to the BetVI family.

Its subcellular location is the cytoplasm. Functionally, may be a general steroid carrier protein. This Betula pendula (European white birch) protein is Major pollen allergen Bet v 1-A (BETVIA).